Reading from the N-terminus, the 105-residue chain is Unclassified hydrophobin D (105 aa).

The N-terminal stretch at 1 to 18 (MKFYIVLLALAAFAMAEA) is a signal peptide. 3 disulfides stabilise this stretch: Cys35-Cys86, Cys42-Cys83, and Cys43-Cys49.

It localises to the secreted. The protein resides in the cell wall. Its function is as follows. Aerial growth, conidiation, and dispersal of filamentous fungi in the environment rely upon a capability of their secreting small amphipathic proteins called hydrophobins (HPBs) with low sequence identity. Class I can self-assemble into an outermost layer of rodlet bundles on aerial cell surfaces, conferring cellular hydrophobicity that supports fungal growth, development and dispersal; whereas Class II form highly ordered films at water-air interfaces through intermolecular interactions but contribute nothing to the rodlet structure. In P.expansum, hydrophobins contribute to germination, tolerance to cold stress and mycotoxins patulin and citrinin production. The polypeptide is Unclassified hydrophobin D (Penicillium expansum (Blue mold rot fungus)).